The following is a 445-amino-acid chain: Phosphoglucosamine mutase (445 aa).

The active-site Phosphoserine intermediate is S105. Mg(2+)-binding residues include S105, D244, D246, and D248. The residue at position 105 (S105) is a Phosphoserine.

It belongs to the phosphohexose mutase family. Mg(2+) is required as a cofactor. Post-translationally, activated by phosphorylation.

It carries out the reaction alpha-D-glucosamine 1-phosphate = D-glucosamine 6-phosphate. Functionally, catalyzes the conversion of glucosamine-6-phosphate to glucosamine-1-phosphate. The protein is Phosphoglucosamine mutase of Janthinobacterium sp. (strain Marseille) (Minibacterium massiliensis).